The following is a 1124-amino-acid chain: DNA-directed RNA polymerase subunit Rpo2 (1124 aa).

Zn(2+) contacts are provided by C1061, C1064, C1079, and H1082.

Belongs to the RNA polymerase beta chain family. As to quaternary structure, part of the 13-subunit RNA polymerase complex. Requires Zn(2+) as cofactor.

It is found in the cytoplasm. The catalysed reaction is RNA(n) + a ribonucleoside 5'-triphosphate = RNA(n+1) + diphosphate. DNA-dependent RNA polymerase (RNAP) catalyzes the transcription of DNA into RNA using the four ribonucleoside triphosphates as substrates. This subunit is involved in DNA promoter recognition. The chain is DNA-directed RNA polymerase subunit Rpo2 from Saccharolobus solfataricus (strain ATCC 35092 / DSM 1617 / JCM 11322 / P2) (Sulfolobus solfataricus).